Consider the following 45-residue polypeptide: Photosystem II reaction center protein K (45 aa).

Residues 1-8 constitute a propeptide that is removed on maturation; the sequence is MFSINFLG. The chain crosses the membrane as a helical span at residues 17–37; the sequence is FDPIVDVLPIIPLLFLLLAFV.

The protein belongs to the PsbK family. PSII is composed of 1 copy each of membrane proteins PsbA, PsbB, PsbC, PsbD, PsbE, PsbF, PsbH, PsbI, PsbJ, PsbK, PsbL, PsbM, PsbT, PsbY, PsbZ, Psb30/Ycf12, at least 3 peripheral proteins of the oxygen-evolving complex and a large number of cofactors. It forms dimeric complexes.

Its subcellular location is the plastid. It is found in the chloroplast thylakoid membrane. One of the components of the core complex of photosystem II (PSII). PSII is a light-driven water:plastoquinone oxidoreductase that uses light energy to abstract electrons from H(2)O, generating O(2) and a proton gradient subsequently used for ATP formation. It consists of a core antenna complex that captures photons, and an electron transfer chain that converts photonic excitation into a charge separation. This chain is Photosystem II reaction center protein K, found in Euglena viridis (Cercaria viridis).